Reading from the N-terminus, the 400-residue chain is Probable tRNA sulfurtransferase (400 aa).

The region spanning 60-164 (EPIIEKLKNV…KEATYITSGT (105 aa)) is the THUMP domain. ATP is bound by residues 182 to 183 (LL), 207 to 208 (HF), arginine 264, glycine 286, and glutamine 295.

This sequence belongs to the ThiI family.

Its subcellular location is the cytoplasm. It carries out the reaction [ThiI sulfur-carrier protein]-S-sulfanyl-L-cysteine + a uridine in tRNA + 2 reduced [2Fe-2S]-[ferredoxin] + ATP + H(+) = [ThiI sulfur-carrier protein]-L-cysteine + a 4-thiouridine in tRNA + 2 oxidized [2Fe-2S]-[ferredoxin] + AMP + diphosphate. The enzyme catalyses [ThiS sulfur-carrier protein]-C-terminal Gly-Gly-AMP + S-sulfanyl-L-cysteinyl-[cysteine desulfurase] + AH2 = [ThiS sulfur-carrier protein]-C-terminal-Gly-aminoethanethioate + L-cysteinyl-[cysteine desulfurase] + A + AMP + 2 H(+). The protein operates within cofactor biosynthesis; thiamine diphosphate biosynthesis. Its function is as follows. Catalyzes the ATP-dependent transfer of a sulfur to tRNA to produce 4-thiouridine in position 8 of tRNAs, which functions as a near-UV photosensor. Also catalyzes the transfer of sulfur to the sulfur carrier protein ThiS, forming ThiS-thiocarboxylate. This is a step in the synthesis of thiazole, in the thiamine biosynthesis pathway. The sulfur is donated as persulfide by IscS. In Oceanobacillus iheyensis (strain DSM 14371 / CIP 107618 / JCM 11309 / KCTC 3954 / HTE831), this protein is Probable tRNA sulfurtransferase.